We begin with the raw amino-acid sequence, 284 residues long: Adenylate kinase 1, chloroplastic (284 aa).

A chloroplast-targeting transit peptide spans 1–36; the sequence is MARLVRVARSSSLFGFGNRFYSTSAEASHASSPSPF. An ATP-binding site is contributed by 61–66; the sequence is GVGKGT. Residues 81–110 form an NMP region; that stretch reads ATGDLVREELASSGPLSQKLSEIVNQGKLV. AMP contacts are provided by residues threonine 82, arginine 87, 108-110, 138-141, and glutamine 145; these read KLV and GFPR. The interval 174–222 is LID; the sequence is GRRTCSQCGKGFNVAHINLKGENGRPGISMDPLLPPHQCMSKLVTRADD. Arginine 175 contributes to the ATP binding site. Arginine 219 and arginine 230 together coordinate AMP. ATP is bound at residue glycine 258.

It belongs to the adenylate kinase family. In terms of assembly, monomer. In terms of tissue distribution, highly expressed in flowers and at lower levels in roots, leaves and stems.

It localises to the plastid. The protein localises to the chloroplast stroma. The catalysed reaction is AMP + ATP = 2 ADP. Functionally, catalyzes the reversible transfer of the terminal phosphate group between ATP and AMP. Plays an important role in cellular energy homeostasis, adenine nucleotide metabolism and plant growth. This Arabidopsis thaliana (Mouse-ear cress) protein is Adenylate kinase 1, chloroplastic (ADK).